A 245-amino-acid polypeptide reads, in one-letter code: 8-amino-3,8-dideoxy-manno-octulosonate cytidylyltransferase (245 aa).

Belongs to the KdsB family.

It is found in the cytoplasm. It catalyses the reaction 8-amino-3,8-dideoxy-alpha-D-manno-octulosonate + CTP = CMP-8-amino-3,8-dideoxy-alpha-D-manno-oct-2-ulosonate + diphosphate. The protein operates within bacterial outer membrane biogenesis; lipopolysaccharide biosynthesis. Its function is as follows. Activates KDO8N (a required 8-carbon sugar) for incorporation into bacterial lipopolysaccharide in the Shewanella genus. The polypeptide is 8-amino-3,8-dideoxy-manno-octulosonate cytidylyltransferase (Shewanella piezotolerans (strain WP3 / JCM 13877)).